Consider the following 569-residue polypeptide: Endonuclease/exonuclease/phosphatase family domain-containing protein 1 (569 aa).

The interval 1-20 (MGSTLGCHRSIPRDPSDLSH) is disordered. G2 is lipidated: N-myristoyl glycine. The segment covering 11 to 20 (IPRDPSDLSH) has biased composition (basic and acidic residues). A phosphoserine mark is found at S16, S21, and S25. One can recognise a HhH domain in the interval 38-67 (ERLNINTATEEELMTLPGVTRAVARSIVEY). Phosphoserine is present on residues S106, S110, S160, and S173. The disordered stretch occupies residues 200–225 (SRPPSTHTNGGLTFTAKPHPSPTSLS). Polar residues predominate over residues 202–211 (PPSTHTNGGL). T265 is subject to Phosphothreonine. Residue S428 is modified to Phosphoserine. A disordered region spans residues 545–569 (SKKDAPRNGSGVALERSEANIKHER). Over residues 559 to 569 (ERSEANIKHER) the composition is skewed to basic and acidic residues.

In Homo sapiens (Human), this protein is Endonuclease/exonuclease/phosphatase family domain-containing protein 1 (EEPD1).